Consider the following 747-residue polypeptide: DNA ligase 1 (747 aa).

The disordered stretch occupies residues 1–84; it reads MQKSITSFFK…KEVDDKTTDK (84 aa). Phosphoserine occurs at positions 18, 20, 42, 44, 46, 60, and 65. Over residues 26–42 the composition is skewed to basic and acidic residues; that stretch reads PKIDAKTELPDEPHIKS. Positions 60–84 are enriched in basic and acidic residues; that stretch reads SEEKTSPVKNVKKEPKEVDDKTTDK. The active-site N6-AMP-lysine intermediate is the lysine 395. Residues 725 to 740 show a composition bias toward polar residues; it reads QSQDQVKNNQKSSTQM. The segment at 725–747 is disordered; it reads QSQDQVKNNQKSSTQMEMEDEFY.

The protein belongs to the ATP-dependent DNA ligase family.

Its subcellular location is the nucleus. The catalysed reaction is ATP + (deoxyribonucleotide)n-3'-hydroxyl + 5'-phospho-(deoxyribonucleotide)m = (deoxyribonucleotide)n+m + AMP + diphosphate.. Functionally, DNA ligase that seals nicks in double-stranded DNA during DNA replication, DNA recombination and DNA repair. The sequence is that of DNA ligase 1 from Drosophila melanogaster (Fruit fly).